A 134-amino-acid chain; its full sequence is Large ribosomal subunit protein uL24 (134 aa).

The protein belongs to the universal ribosomal protein uL24 family. Part of the 50S ribosomal subunit.

One of two assembly initiator proteins, it binds directly to the 5'-end of the 23S rRNA, where it nucleates assembly of the 50S subunit. Functionally, located at the polypeptide exit tunnel on the outside of the subunit. This is Large ribosomal subunit protein uL24 from Sulfolobus acidocaldarius (strain ATCC 33909 / DSM 639 / JCM 8929 / NBRC 15157 / NCIMB 11770).